A 1225-amino-acid polypeptide reads, in one-letter code: DNA-directed RNA polymerase subunit beta' (1225 aa).

Positions 60, 62, 75, and 78 each coordinate Zn(2+). Mg(2+) contacts are provided by aspartate 450, aspartate 452, and aspartate 454. Zn(2+) is bound by residues cysteine 818, cysteine 892, cysteine 899, and cysteine 902.

The protein belongs to the RNA polymerase beta' chain family. In terms of assembly, the RNAP catalytic core consists of 2 alpha, 1 beta, 1 beta' and 1 omega subunit. When a sigma factor is associated with the core the holoenzyme is formed, which can initiate transcription. Mg(2+) is required as a cofactor. Zn(2+) serves as cofactor.

It carries out the reaction RNA(n) + a ribonucleoside 5'-triphosphate = RNA(n+1) + diphosphate. In terms of biological role, DNA-dependent RNA polymerase catalyzes the transcription of DNA into RNA using the four ribonucleoside triphosphates as substrates. The protein is DNA-directed RNA polymerase subunit beta' of Streptococcus pneumoniae (strain Hungary19A-6).